Reading from the N-terminus, the 436-residue chain is 3-ketoacyl-CoA thiolase (436 aa).

Catalysis depends on C99, which acts as the Acyl-thioester intermediate. Residues H392 and C422 each act as proton acceptor in the active site.

This sequence belongs to the thiolase-like superfamily. Thiolase family. As to quaternary structure, heterotetramer of two alpha chains (FadJ) and two beta chains (FadI).

Its subcellular location is the cytoplasm. It carries out the reaction an acyl-CoA + acetyl-CoA = a 3-oxoacyl-CoA + CoA. The protein operates within lipid metabolism; fatty acid beta-oxidation. Catalyzes the final step of fatty acid oxidation in which acetyl-CoA is released and the CoA ester of a fatty acid two carbons shorter is formed. The chain is 3-ketoacyl-CoA thiolase from Escherichia coli O9:H4 (strain HS).